A 345-amino-acid polypeptide reads, in one-letter code: tRNA N6-adenosine threonylcarbamoyltransferase (345 aa).

His-109 and His-113 together coordinate Fe cation. Residues 136-140, Asp-169, Gly-182, Asp-186, and Asn-284 contribute to the substrate site; that span reads TVSGG. A Fe cation-binding site is contributed by Asp-312.

The protein belongs to the KAE1 / TsaD family. Fe(2+) serves as cofactor.

Its subcellular location is the cytoplasm. It catalyses the reaction L-threonylcarbamoyladenylate + adenosine(37) in tRNA = N(6)-L-threonylcarbamoyladenosine(37) in tRNA + AMP + H(+). Required for the formation of a threonylcarbamoyl group on adenosine at position 37 (t(6)A37) in tRNAs that read codons beginning with adenine. Is involved in the transfer of the threonylcarbamoyl moiety of threonylcarbamoyl-AMP (TC-AMP) to the N6 group of A37, together with TsaE and TsaB. TsaD likely plays a direct catalytic role in this reaction. The polypeptide is tRNA N6-adenosine threonylcarbamoyltransferase (Prosthecochloris aestuarii (strain DSM 271 / SK 413)).